Consider the following 152-residue polypeptide: Transcriptional repressor NrdR (152 aa).

A zinc finger lies at 3 to 34 (CPYCQHPDSDVIDTRKLHNGETIRRRRKCEAC). The ATP-cone domain maps to 49 to 139 (ITVVKKNGER…VYRSFADIGK (91 aa)).

It belongs to the NrdR family. Zn(2+) is required as a cofactor.

Negatively regulates transcription of bacterial ribonucleotide reductase nrd genes and operons by binding to NrdR-boxes. The sequence is that of Transcriptional repressor NrdR from Roseiflexus sp. (strain RS-1).